The primary structure comprises 95 residues: Small ribosomal subunit protein bS18 (95 aa).

Belongs to the bacterial ribosomal protein bS18 family. As to quaternary structure, part of the 30S ribosomal subunit. Forms a tight heterodimer with protein bS6.

Functionally, binds as a heterodimer with protein bS6 to the central domain of the 16S rRNA, where it helps stabilize the platform of the 30S subunit. The protein is Small ribosomal subunit protein bS18 of Rickettsia prowazekii (strain Madrid E).